Reading from the N-terminus, the 106-residue chain is UPF0145 protein CLH_2273 (106 aa).

This sequence belongs to the UPF0145 family.

This chain is UPF0145 protein CLH_2273, found in Clostridium botulinum (strain Alaska E43 / Type E3).